Here is a 371-residue protein sequence, read N- to C-terminus: tRNA-specific 2-thiouridylase MnmA (371 aa).

Residues 24–31 (AMSGGVDS) and leucine 50 contribute to the ATP site. Cysteine 119 acts as the Nucleophile in catalysis. The cysteines at positions 119 and 215 are disulfide-linked. Glycine 143 is a binding site for ATP. The tract at residues 165 to 167 (KDQ) is interaction with tRNA. The active-site Cysteine persulfide intermediate is cysteine 215.

It belongs to the MnmA/TRMU family.

It localises to the cytoplasm. It catalyses the reaction S-sulfanyl-L-cysteinyl-[protein] + uridine(34) in tRNA + AH2 + ATP = 2-thiouridine(34) in tRNA + L-cysteinyl-[protein] + A + AMP + diphosphate + H(+). Functionally, catalyzes the 2-thiolation of uridine at the wobble position (U34) of tRNA, leading to the formation of s(2)U34. In Neorickettsia sennetsu (strain ATCC VR-367 / Miyayama) (Ehrlichia sennetsu), this protein is tRNA-specific 2-thiouridylase MnmA.